A 364-amino-acid polypeptide reads, in one-letter code: Ribosomal RNA large subunit methyltransferase M (364 aa).

S-adenosyl-L-methionine-binding positions include Ser198, 231–234, Asp250, Asp270, and Asp286; that span reads APGG. The active-site Proton acceptor is Lys315.

This sequence belongs to the class I-like SAM-binding methyltransferase superfamily. RNA methyltransferase RlmE family. RlmM subfamily. As to quaternary structure, monomer.

The protein localises to the cytoplasm. The catalysed reaction is cytidine(2498) in 23S rRNA + S-adenosyl-L-methionine = 2'-O-methylcytidine(2498) in 23S rRNA + S-adenosyl-L-homocysteine + H(+). In terms of biological role, catalyzes the 2'-O-methylation at nucleotide C2498 in 23S rRNA. This is Ribosomal RNA large subunit methyltransferase M from Azoarcus sp. (strain BH72).